The sequence spans 1055 residues: Vacuolar protein sorting-associated protein 54 (1055 aa).

Positions 363–383 (TKKIIEVHQKYEQKKHLLAKL) form a coiled coil. Residues 774 to 794 (IDDGPTKKPFKRTGSSATIDS) form a disordered region.

Belongs to the VPS54 family. As to quaternary structure, component of the Golgi-associated retrograde protein (GARP) complex, also called VFT (VPS fifty-three) complex, composed of VPS51, VPS52, VPS53 and VPS54.

Its subcellular location is the golgi apparatus. The protein resides in the trans-Golgi network. Functionally, acts as a component of the GARP complex that is involved in retrograde transport from early and late endosomes to the trans-Golgi network (TGN). The GARP complex facilitates tethering as well as SNARE complex assembly at the Golgi. This Caenorhabditis briggsae protein is Vacuolar protein sorting-associated protein 54 (vps-54).